Consider the following 396-residue polypeptide: 1-deoxy-D-xylulose 5-phosphate reductoisomerase (396 aa).

NADPH is bound by residues threonine 10, glycine 11, serine 12, isoleucine 13, glutamine 38, and asparagine 124. Lysine 125 contacts 1-deoxy-D-xylulose 5-phosphate. Glutamate 126 serves as a coordination point for NADPH. A Mn(2+)-binding site is contributed by aspartate 150. The 1-deoxy-D-xylulose 5-phosphate site is built by serine 151, glutamate 152, serine 179, and histidine 202. Glutamate 152 lines the Mn(2+) pocket. Glycine 208 lines the NADPH pocket. 1-deoxy-D-xylulose 5-phosphate-binding residues include serine 215, asparagine 220, lysine 221, and glutamate 224. Glutamate 224 lines the Mn(2+) pocket.

Belongs to the DXR family. Requires Mg(2+) as cofactor. It depends on Mn(2+) as a cofactor.

The catalysed reaction is 2-C-methyl-D-erythritol 4-phosphate + NADP(+) = 1-deoxy-D-xylulose 5-phosphate + NADPH + H(+). It functions in the pathway isoprenoid biosynthesis; isopentenyl diphosphate biosynthesis via DXP pathway; isopentenyl diphosphate from 1-deoxy-D-xylulose 5-phosphate: step 1/6. In terms of biological role, catalyzes the NADPH-dependent rearrangement and reduction of 1-deoxy-D-xylulose-5-phosphate (DXP) to 2-C-methyl-D-erythritol 4-phosphate (MEP). This is 1-deoxy-D-xylulose 5-phosphate reductoisomerase from Ralstonia pickettii (strain 12J).